The primary structure comprises 540 residues: 2-isopropylmalate synthase (540 aa).

The Pyruvate carboxyltransferase domain occupies 8–271 (VLIFDTTLRD…NPFFGREEDS (264 aa)). Mn(2+) contacts are provided by aspartate 17, histidine 208, histidine 210, and asparagine 244. The interval 408 to 540 (QLKLVQVSCG…PVVLESRPTL (133 aa)) is regulatory domain.

It belongs to the alpha-IPM synthase/homocitrate synthase family. LeuA type 1 subfamily. In terms of assembly, homodimer. Requires Mn(2+) as cofactor.

The protein resides in the cytoplasm. It carries out the reaction 3-methyl-2-oxobutanoate + acetyl-CoA + H2O = (2S)-2-isopropylmalate + CoA + H(+). The protein operates within amino-acid biosynthesis; L-leucine biosynthesis; L-leucine from 3-methyl-2-oxobutanoate: step 1/4. Catalyzes the condensation of the acetyl group of acetyl-CoA with 3-methyl-2-oxobutanoate (2-ketoisovalerate) to form 3-carboxy-3-hydroxy-4-methylpentanoate (2-isopropylmalate). This is 2-isopropylmalate synthase from Synechococcus sp. (strain CC9605).